The sequence spans 394 residues: G2/mitotic-specific cyclin-B2 (394 aa).

This sequence belongs to the cyclin family. Cyclin AB subfamily. In terms of assembly, interacts with the CDK1 protein kinase to form a serine/threonine kinase holoenzyme complex also known as maturation promoting factor (MPF). The cyclin subunit imparts substrate specificity to the complex.

Functionally, essential for the control of the cell cycle at the G2/M (mitosis) transition. This is G2/mitotic-specific cyclin-B2 (ccnb2) from Anguilla japonica (Japanese eel).